A 346-amino-acid chain; its full sequence is Dimethylallyltranstransferase (346 aa).

3 residues coordinate isopentenyl diphosphate: Lys-96, Arg-99, and His-128. Mg(2+) contacts are provided by Asp-135 and Asp-141. Arg-147 lines the isopentenyl diphosphate pocket.

This sequence belongs to the FPP/GGPP synthase family. Mg(2+) is required as a cofactor.

The catalysed reaction is isopentenyl diphosphate + dimethylallyl diphosphate = (2E)-geranyl diphosphate + diphosphate. It functions in the pathway isoprenoid biosynthesis; geranyl diphosphate biosynthesis; geranyl diphosphate from dimethylallyl diphosphate and isopentenyl diphosphate: step 1/1. Its function is as follows. Prenyltransferase involved in the biosynthesis of ambiguines, a family of hapalindole-type alkaloids. Catalyzes the addition of isopentenyl diphosphate (IPP) onto dimethylallyl diphosphate (DMAPP) to form geranyl pyrophosphate (GPP). Cannot use farnesyl diphosphate (FPP) or geranylgeranyl diphosphate (GGPP). The chain is Dimethylallyltranstransferase from Fischerella ambigua (strain UTEX 1903).